The sequence spans 222 residues: Lipid A 4'-phosphatase (222 aa).

The Cytoplasmic segment spans residues 1–3 (MAR). A helical transmembrane segment spans residues 4–24 (FHIILGLVVCFFAWIFFLIFP). Over 25 to 58 (NLDIQFAGHFYNSSAHQFIGGYDGFLGFLHWFAR) the chain is Periplasmic. The chain crosses the membrane as a helical span at residues 59–79 (FFPIFFSIIVILFLLGSLFID). Over 80 to 87 (KFKIKYRK) the chain is Cytoplasmic. A helical membrane pass occupies residues 88–108 (AIFFIAVCLWIGPGLVVNYVF). The Periplasmic segment spans residues 109-144 (KDHWGRPRPVMVEQFNGDKIFQPPFVISSQCDKNCS). Residues 145–165 (FVCGDASMGFWLFAFMPLLAT) traverse the membrane as a helical segment. Residues 166 to 169 (RKKK) lie on the Cytoplasmic side of the membrane. The chain crosses the membrane as a helical span at residues 170-190 (LVAFIAAVVAGGGLGLMRMSQ). The Periplasmic segment spans residues 191-193 (GGH). Residues 194–214 (FFSDVVFCGIFVYISTWVVYA) traverse the membrane as a helical segment. At 215-222 (LMYRKKEY) the chain is on the cytoplasmic side.

This sequence belongs to the lipid A LpxF 4'-phosphatase family.

The protein localises to the cell inner membrane. It participates in bacterial outer membrane biogenesis; LPS lipid A biosynthesis. Its function is as follows. Removes the 4'-phosphate moiety from lipid IV(A) (a tetraacylated precursor of lipid A) and from pentaacylated lipid A, but not from hexaacylated lipid A (as is found in E.coli). Does not dephosphorylate phosphatidic acid, phosphatidylglycerophosphate, or the 1-phosphate group of lipid A and lipid A precursors. Its expression in E.coli confers resistance to the cationic antimicrobial peptide (CAMP) polymyxin B. Plays a critical role in the ability of the bacteria to avoid the host's innate immune system, especially the bactericidal action of CAMPs, although whether it is CAMP-sensitivity or increased sensitivity to the immune system is not clear. This Francisella tularensis subsp. novicida (strain U112) protein is Lipid A 4'-phosphatase.